A 354-amino-acid chain; its full sequence is MRIEKGIGIKNVLKIMCPGTQLREGLENILRAKTGGLLVIGDDEEVMKLVDGGFYINSEYTPSYAYELAKMDGAIVITGDLKKIVCANAQLIPDSSIPTYETGTRHRTAHRVAKQTNNIVIAISQRRNIITMYKGDIKYVLRESSVILGKANQALQTLEKYVAVLERVINNLNLLEFQDLTTLFDVVTAIQRTEMVMRIVEEINMYILELGNEGRLISMQLNELVKHIERDGILLIRDYCKDGLQYNEVYEHIQKLNSSELLELDAVARTLGRGGIPLMDTLISPKGYRMLSKVPRIPSNVIDNLIKEFEELSNIIDADINDLDNVEGIGEARATAIKDGLKRIKEQVSLKKEI.

The DAC domain maps to 6 to 144; that stretch reads GIGIKNVLKI…GDIKYVLRES (139 aa). Residues Gly73, Leu91, and 104-108 each bind ATP; that span reads TRHRT.

This sequence belongs to the DisA family. In terms of assembly, homooctamer. Mg(2+) serves as cofactor.

The catalysed reaction is 2 ATP = 3',3'-c-di-AMP + 2 diphosphate. Its function is as follows. Participates in a DNA-damage check-point that is active prior to asymmetric division when DNA is damaged. DisA forms globular foci that rapidly scan along the chromosomes during sporulation, searching for lesions. When a lesion is present, DisA pauses at the lesion site. This triggers a cellular response that culminates in a temporary block in sporulation initiation. In terms of biological role, also has diadenylate cyclase activity, catalyzing the condensation of 2 ATP molecules into cyclic di-AMP (c-di-AMP). c-di-AMP acts as a signaling molecule that couples DNA integrity with progression of sporulation. The rise in c-di-AMP level generated by DisA while scanning the chromosome, operates as a positive signal that advances sporulation; upon encountering a lesion, the DisA focus arrests at the damaged site and halts c-di-AMP synthesis. The sequence is that of DNA integrity scanning protein DisA from Clostridium beijerinckii (strain ATCC 51743 / NCIMB 8052) (Clostridium acetobutylicum).